Consider the following 240-residue polypeptide: Probable phosphatase Pcar_2586 (240 aa).

The Zn(2+) site is built by H12, H14, H20, H45, E78, H105, H136, D197, and H199.

This sequence belongs to the PHP family. It depends on Zn(2+) as a cofactor.

The polypeptide is Probable phosphatase Pcar_2586 (Syntrophotalea carbinolica (strain DSM 2380 / NBRC 103641 / GraBd1) (Pelobacter carbinolicus)).